The sequence spans 738 residues: Polyribonucleotide nucleotidyltransferase (738 aa).

Positions 514 and 520 each coordinate Mg(2+). The region spanning 580–639 (PRIITVKIPVDKIGEVIGPKGKMINQIQEDTGAEITIEDDGTIYIGAQVGSQAEAARATI) is the KH domain. The S1 motif domain occupies 651–723 (GERYLGTVVK…SRGKLSLIPV (73 aa)).

This sequence belongs to the polyribonucleotide nucleotidyltransferase family. It depends on Mg(2+) as a cofactor.

It is found in the cytoplasm. It catalyses the reaction RNA(n+1) + phosphate = RNA(n) + a ribonucleoside 5'-diphosphate. Functionally, involved in mRNA degradation. Catalyzes the phosphorolysis of single-stranded polyribonucleotides processively in the 3'- to 5'-direction. The chain is Polyribonucleotide nucleotidyltransferase from Streptomyces avermitilis (strain ATCC 31267 / DSM 46492 / JCM 5070 / NBRC 14893 / NCIMB 12804 / NRRL 8165 / MA-4680).